The following is a 956-amino-acid chain: Bromodomain testis-specific protein (956 aa).

One can recognise a Bromo 1 domain in the interval 26–132; that stretch reads RLTNQLQFLQ…KLFMQKLSQM (107 aa). At serine 186 the chain carries Phosphoserine. Residues 208–219 carry the Nuclear localization signal motif; it reads KGVKRRADTTTP. The disordered stretch occupies residues 210 to 239; that stretch reads VKRRADTTTPTTSIAKASSESPPTLRETKP. Polar residues predominate over residues 216–231; that stretch reads TTTPTTSIAKASSESP. Residues 266-375 form the Bromo 2 domain; that stretch reads VKVTEQLKHC…DVFELHFAKI (110 aa). Disordered stretches follow at residues 391 to 420, 442 to 508, 607 to 747, and 859 to 934; these read NSAQ…ERVQ, VPLR…PMNY, NQLN…HSQQ, and LEHN…RREA. The span at 392–409 shows a compositional bias: low complexity; the sequence is SAQALSRESSSEASSGDA. The stretch at 417-442 forms a coiled coil; that stretch reads ERVQHLAKLQEQLNAVHQQLQVLSQV. The span at 445-463 shows a compositional bias: basic residues; the sequence is RKLKKKNEKSKRAPKRKKV. One can recognise an NET domain in the interval 496 to 578; that stretch reads KSEEEDNAKP…ACLRKRSLKP (83 aa). A compositionally biased stretch (pro residues) spans 625 to 640; the sequence is PPPPPPPPPPPPPPPE. The segment covering 649–688 has biased composition (low complexity); it reads DSSSSSGSGSGSSSSSSGSSSSSSSSGSASSSSDSSSSDS. Residues 714 to 724 show a composition bias toward polar residues; sequence KQIQSSVQDIT. Positions 844–940 form a coiled coil; it reads EKEVKARTQE…RREAMAGTID (97 aa). Basic and acidic residues-rich tracts occupy residues 859 to 874 and 915 to 934; these read LEHN…ENQR and LLKD…RREA.

This sequence belongs to the BET family. Interacts with SMARCE1. Interacts with mRNA splicing machinery proteins SRSF2, DDX5, HNRNPK and TARDBP. Interacts with the acetylated N-terminus of histone H1, H2, H3 and H4. Interacts with P-TEFb components CDK9 and CCNT1/cyclin-T1. Post-translationally, ubiquitinated in a SPOP-dependent manner, leading to proteasomal degradation. Testis-specific. Expressed in germinal cells from the early meiotic (pachytene) spermatocytes and during spermiogenesis in the round and elongating spermatids until the condensed late spermatids. No expression seen in spermatogonia.

It localises to the nucleus. Its function is as follows. Testis-specific chromatin protein that specifically binds histone H4 acetylated at 'Lys-5' and 'Lys-8' (H4K5ac and H4K8ac, respectively) and plays a key role in spermatogenesis. Required in late pachytene spermatocytes: plays a role in meiotic and post-meiotic cells by binding to acetylated histones at the promoter of specific meiotic and post-meiotic genes, facilitating their activation at the appropriate time. In the post-meiotic phase of spermatogenesis, binds to hyperacetylated histones and participates in their general removal from DNA. Also recognizes and binds a subset of butyrylated histones: able to bind histone H4 butyrylated at 'Lys-8' (H4K8ac), while it is not able to bind H4 butyrylated at 'Lys-5' (H4K5ac). Also acts as a component of the splicing machinery in pachytene spermatocytes and round spermatids and participates in 3'-UTR truncation of specific mRNAs in post-meiotic spermatids. Required for chromocenter organization, a structure comprised of peri-centromeric heterochromatin. In Mus musculus (Mouse), this protein is Bromodomain testis-specific protein (Brdt).